The primary structure comprises 216 residues: Ras-related protein Rab-11A (216 aa).

G2 is subject to N-acetylglycine. GTP contacts are provided by S20, G21, V22, G23, K24, S25, N26, N37, L38, S40, S42, and T43. Residue S25 participates in Mg(2+) binding. Residues 36–47 (FNLESKSTIGVE) carry the Switch 1 motif. Positions 43 and 66 each coordinate Mg(2+). The short motif at 67-86 (TAGQERYRAITSAYYRGAVG) is the Switch 2 element. GTP is bound by residues G69, N124, K125, D127, A155, and L156. The tract at residues 183 to 207 (DRRENDMSPSNNVVPIHVPPTTENK) is disordered. S-geranylgeranyl cysteine attachment occurs at residues C212 and C213. At C213 the chain carries Cysteine methyl ester. Residues 214–216 (QNI) constitute a propeptide, removed in mature form.

This sequence belongs to the small GTPase superfamily. Rab family. In terms of assembly, interacts (GTP-bound form) with RAB11FIPs (via their C-termini) including RAB11FIP1, RAB11FIP2, RAB11FIP3, RAB11FIP4 and RAB11FIP5 effectors. Forms a complex with RAB11FIP3 and dynein intermediate chain DYNC1LI1; the interaction between RAB11A1 and RAB11FIP3 is direct; the complex regulates endocytic trafficking. Interacts with EVI5; EVI5 and RAB11FIP3 may be mutually exclusive and compete for binding RAB11A. Interacts with SGSM1, SGSM2, SGSM3 and VIPAS39. Interacts with EXOC6 in a GTP-dependent manner. Interacts with RAB11FIP5. Interacts with STXBP6. Interacts (GDP-bound form) with ZFYVE27. Interacts with BIRC6/bruce. May interact with TBC1D14. Interacts with UNC119; in a cell cycle-dependent manner. GDP-bound and nucleotide-free forms interact with SH3BP5. Interacts (GDP-bound form) with KIF5A in a ZFYVE27-dependent manner. Interacts (GDP-bound form) with RELCH. Found in a complex composed of RELCH, OSBP1 and RAB11A. Interacts with TBC1D12. Interacts with DEF6. Interacts with ATP9A. Forms a heterotetramer with RAB11FIP3; the GTP-bound form is preferred for binding. Forms a complex with Rabin8/RAB3IP and RAB11FIP3, probably a heterohexamer with two of each protein subunit, where Rabin8/RAB3IP and RAB11FIP3 simultaneously bind to RAB11A; the complex promotes preciliary trafficking and cilia growth. Forms a complex containing RAB11A, ASAP1, Rabin8/RAB3IP, RAP11FIP3 and ARF4; the complex promotes preciliary trafficking; the complex binds to RHO in photoreceptor cells and promotes RHO ciliary transport. Interacts (GTP-bound form) with WDR44; the interaction prevents RAB11A-RAB3IP-RAB11FIP3 complex formation. Requires Mg(2+) as cofactor.

The protein resides in the cell membrane. It localises to the endosome membrane. The protein localises to the recycling endosome membrane. Its subcellular location is the cleavage furrow. It is found in the cytoplasmic vesicle. The protein resides in the phagosome. It localises to the cytoplasmic vesicle membrane. The protein localises to the golgi apparatus. Its subcellular location is the trans-Golgi network. The enzyme catalyses GTP + H2O = GDP + phosphate + H(+). Regulated by guanine nucleotide exchange factors (GEFs) which promote the exchange of bound GDP for free GTP. Regulated by GTPase activating proteins (GAPs) which increase the GTP hydrolysis activity. Inhibited by GDP dissociation inhibitors (GDIs) which prevent Rab-GDP dissociation. The small GTPases Rab are key regulators of intracellular membrane trafficking, from the formation of transport vesicles to their fusion with membranes. Rabs cycle between an inactive GDP-bound form and an active GTP-bound form that is able to recruit to membranes different set of downstream effectors directly responsible for vesicle formation, movement, tethering and fusion. The small Rab GTPase RAB11A regulates endocytic recycling. Forms a functional Rab11/RAB11FIP3/dynein complex that regulates the movement of peripheral sorting endosomes (SE) along microtubule tracks toward the microtubule organizing center/centrosome, generating the endosomal recycling compartment (ERC). Acts as a major regulator of membrane delivery during cytokinesis. Together with MYO5B and RAB8A participates in epithelial cell polarization. Together with Rabin8/RAB3IP, RAB8A, the exocyst complex, PARD3, PRKCI, ANXA2, CDC42 and DNMBP promotes transcytosis of PODXL to the apical membrane initiation sites (AMIS), apical surface formation and lumenogenesis. Together with MYO5B participates in CFTR trafficking to the plasma membrane and TF (Transferrin) recycling in nonpolarized cells. Required in a complex with MYO5B and RAB11FIP2 for the transport of NPC1L1 to the plasma membrane. Participates in the sorting and basolateral transport of CDH1 from the Golgi apparatus to the plasma membrane. Regulates the recycling of FCGRT (receptor of Fc region of monomeric IgG) to basolateral membranes. May also play a role in melanosome transport and release from melanocytes. Promotes Rabin8/RAB3IP preciliary vesicular trafficking to mother centriole by forming a ciliary targeting complex containing Rab11, ASAP1, Rabin8/RAB3IP, RAB11FIP3 and ARF4, thereby regulating ciliogenesis initiation. On the contrary, upon LPAR1 receptor signaling pathway activation, interaction with phosphorylated WDR44 prevents Rab11-RAB3IP-RAB11FIP3 complex formation and cilia growth. Participates in the export of a subset of neosynthesized proteins through a Rab8-Rab10-Rab11-endososomal dependent export route via interaction with WDR44. The sequence is that of Ras-related protein Rab-11A from Bos taurus (Bovine).